The sequence spans 207 residues: Small ribosomal subunit protein uS2 (207 aa).

The protein belongs to the universal ribosomal protein uS2 family.

The chain is Small ribosomal subunit protein uS2 from Methanocella arvoryzae (strain DSM 22066 / NBRC 105507 / MRE50).